A 322-amino-acid chain; its full sequence is CRISPR-associated endonuclease Cas1 (322 aa).

Residues Glu-149, His-214, and Glu-229 each coordinate Mn(2+).

This sequence belongs to the CRISPR-associated endonuclease Cas1 family. In terms of assembly, homodimer, forms a heterotetramer with a Cas2 homodimer. It depends on Mg(2+) as a cofactor. Requires Mn(2+) as cofactor.

Its function is as follows. CRISPR (clustered regularly interspaced short palindromic repeat), is an adaptive immune system that provides protection against mobile genetic elements (viruses, transposable elements and conjugative plasmids). CRISPR clusters contain spacers, sequences complementary to antecedent mobile elements, and target invading nucleic acids. CRISPR clusters are transcribed and processed into CRISPR RNA (crRNA). Acts as a dsDNA endonuclease. Involved in the integration of spacer DNA into the CRISPR cassette. This is CRISPR-associated endonuclease Cas1 from Pyrococcus horikoshii (strain ATCC 700860 / DSM 12428 / JCM 9974 / NBRC 100139 / OT-3).